A 360-amino-acid chain; its full sequence is MSHTASTPTPEEYSAQQPSTQGTRVEFRGITKVFSNNKSAKTTALDNVTLTVEPGEVIGIIGYSGAGKSTLVRLINGLDSPTSGSLLLNGTDIVGMPESKLRKLRSNIGMIFQQFNLFQSRTAAGNVEYPLEVAKMDKAARKARVQEMLEFVGLGDKGKNYPEQLSGGQKQRVGIARALATNPTLLLADEATSALDPETTHEVLELLRKVNRELGITIVVITHEMEVVRSIADKVAVMESGKVVEYGSVYEVFSNPQTQVAQKFVATALRNTPDQVESEDLLSHEGRLFTIDLTETSGFFAATARAAEQGAFVNIVHGGVTTLQRQSFGKMTVRLTGNTAAIEEFYQTLTKTTTIKEITR.

A disordered region spans residues 1–22; it reads MSHTASTPTPEEYSAQQPSTQG. One can recognise an ABC transporter domain in the interval 25–265; it reads VEFRGITKVF…PQTQVAQKFV (241 aa). 62-69 lines the ATP pocket; that stretch reads GYSGAGKS.

This sequence belongs to the ABC transporter superfamily. Methionine importer (TC 3.A.1.24) family. The complex is composed of two ATP-binding proteins (MetN), two transmembrane proteins (MetI) and a solute-binding protein (MetQ).

It is found in the cell membrane. It catalyses the reaction L-methionine(out) + ATP + H2O = L-methionine(in) + ADP + phosphate + H(+). It carries out the reaction D-methionine(out) + ATP + H2O = D-methionine(in) + ADP + phosphate + H(+). Functionally, part of the ABC transporter complex MetNIQ involved in methionine import. Responsible for energy coupling to the transport system. The protein is Methionine import ATP-binding protein MetN of Corynebacterium glutamicum (strain ATCC 13032 / DSM 20300 / JCM 1318 / BCRC 11384 / CCUG 27702 / LMG 3730 / NBRC 12168 / NCIMB 10025 / NRRL B-2784 / 534).